We begin with the raw amino-acid sequence, 147 residues long: uncharacterized protein (147 aa).

In terms of domain architecture, HTH marR-type spans 1–137 (MRDNTIGSLI…LYELMTKVHK (137 aa)). The H-T-H motif DNA-binding region spans 53–76 (QMELAEKVTVTQGGISRMLTRLEK).

This is an uncharacterized protein from Bacillus cereus (strain ATCC 14579 / DSM 31 / CCUG 7414 / JCM 2152 / NBRC 15305 / NCIMB 9373 / NCTC 2599 / NRRL B-3711).